Reading from the N-terminus, the 293-residue chain is MFRGSITALVTPFRQDGSLDKKAFGALVEWQIAEGSSGLVPVGTTGESPTLTHDEHQEVIRLCVEAANKRVPVIAGAGSNSTREAISFAEHAEKVGADALLVVTPYYNKPNQRGLYEHFAAIARSTSLPIFIYNIPPRSVVDMLPETMARLAADFKNIVGVKDATAKLDRVSEQREACGPDFIQLSGEDATALGFNAHGGVGCISVTANVAPRLCAEFQAASLRGDGARAIELQDRLFPLHKALFLEPNPAGAKYALSRLGRLENVLRSPLVTVEASTAEKIDAAMKHAGLLN.

Thr-45 contacts pyruvate. Tyr-133 serves as the catalytic Proton donor/acceptor. Residue Lys-162 is the Schiff-base intermediate with substrate of the active site. Ile-204 serves as a coordination point for pyruvate.

Belongs to the DapA family. In terms of assembly, homotetramer; dimer of dimers.

Its subcellular location is the cytoplasm. It catalyses the reaction L-aspartate 4-semialdehyde + pyruvate = (2S,4S)-4-hydroxy-2,3,4,5-tetrahydrodipicolinate + H2O + H(+). It participates in amino-acid biosynthesis; L-lysine biosynthesis via DAP pathway; (S)-tetrahydrodipicolinate from L-aspartate: step 3/4. In terms of biological role, catalyzes the condensation of (S)-aspartate-beta-semialdehyde [(S)-ASA] and pyruvate to 4-hydroxy-tetrahydrodipicolinate (HTPA). This Chelativorans sp. (strain BNC1) protein is 4-hydroxy-tetrahydrodipicolinate synthase.